Here is a 358-residue protein sequence, read N- to C-terminus: Molybdenum import ATP-binding protein ModC (358 aa).

The ABC transporter domain maps to 3-228; that stretch reads INVKQKLGDL…LEMRPWLPAK (226 aa). An ATP-binding site is contributed by 30–37; sequence GRSGAGKT. The 68-residue stretch at 289 to 356 folds into the Mop domain; that stretch reads QTSIRNVLLA…IKGVSVTKDD (68 aa).

The protein belongs to the ABC transporter superfamily. Molybdate importer (TC 3.A.1.8) family. In terms of assembly, the complex is composed of two ATP-binding proteins (ModC), two transmembrane proteins (ModB) and a solute-binding protein (ModA).

The protein resides in the cell inner membrane. The catalysed reaction is molybdate(out) + ATP + H2O = molybdate(in) + ADP + phosphate + H(+). Functionally, part of the ABC transporter complex ModABC involved in molybdenum import. Responsible for energy coupling to the transport system. The polypeptide is Molybdenum import ATP-binding protein ModC (Photobacterium profundum (strain SS9)).